A 337-amino-acid chain; its full sequence is UDP-3-O-acylglucosamine N-acyltransferase (337 aa).

H238 acts as the Proton acceptor in catalysis.

This sequence belongs to the transferase hexapeptide repeat family. LpxD subfamily. In terms of assembly, homotrimer.

The enzyme catalyses a UDP-3-O-[(3R)-3-hydroxyacyl]-alpha-D-glucosamine + a (3R)-hydroxyacyl-[ACP] = a UDP-2-N,3-O-bis[(3R)-3-hydroxyacyl]-alpha-D-glucosamine + holo-[ACP] + H(+). The protein operates within bacterial outer membrane biogenesis; LPS lipid A biosynthesis. In terms of biological role, catalyzes the N-acylation of UDP-3-O-acylglucosamine using 3-hydroxyacyl-ACP as the acyl donor. Is involved in the biosynthesis of lipid A, a phosphorylated glycolipid that anchors the lipopolysaccharide to the outer membrane of the cell. The chain is UDP-3-O-acylglucosamine N-acyltransferase from Xanthomonas oryzae pv. oryzae (strain KACC10331 / KXO85).